Here is a 354-residue protein sequence, read N- to C-terminus: 3'-hydroxy-N-methyl-(S)-coclaurine 4'-O-methyltransferase 1 (354 aa).

Aspartate 223 serves as a coordination point for S-adenosyl-L-methionine. Histidine 261 (proton acceptor) is an active-site residue.

Belongs to the class I-like SAM-binding methyltransferase superfamily. Cation-independent O-methyltransferase family. COMT subfamily. In terms of tissue distribution, expressed in roots, stems, leaves and flowers. Restricted to sieve elements of the phloem adjacent or proximal to laticifers.

The enzyme catalyses (S)-3'-hydroxy-N-methylcoclaurine + S-adenosyl-L-methionine = (S)-reticuline + S-adenosyl-L-homocysteine + H(+). Its pathway is alkaloid biosynthesis; (S)-reticuline biosynthesis; (S)-reticuline from (S)-norcoclaurine: step 4/4. Involved in the biosynthesis of benzylisoquinoline alkaloids. Catalyzes the transfer of the methyl group to the 4'-hydroxyl group of 3'-hydroxy-N-methylcoclaurine to form reticuline. Also involved in the papaverine biosynthesis. The sequence is that of 3'-hydroxy-N-methyl-(S)-coclaurine 4'-O-methyltransferase 1 from Papaver somniferum (Opium poppy).